The following is a 332-amino-acid chain: Glycerol-3-phosphate dehydrogenase [NAD(P)+] (332 aa).

The NADPH site is built by W11, R30, and K108. Sn-glycerol 3-phosphate is bound by residues K108, G137, and S139. A141 provides a ligand contact to NADPH. 5 residues coordinate sn-glycerol 3-phosphate: K192, D245, S255, R256, and N257. K192 functions as the Proton acceptor in the catalytic mechanism. R256 contributes to the NADPH binding site. V280 and E282 together coordinate NADPH.

It belongs to the NAD-dependent glycerol-3-phosphate dehydrogenase family.

The protein localises to the cytoplasm. The enzyme catalyses sn-glycerol 3-phosphate + NAD(+) = dihydroxyacetone phosphate + NADH + H(+). It carries out the reaction sn-glycerol 3-phosphate + NADP(+) = dihydroxyacetone phosphate + NADPH + H(+). It participates in membrane lipid metabolism; glycerophospholipid metabolism. Functionally, catalyzes the reduction of the glycolytic intermediate dihydroxyacetone phosphate (DHAP) to sn-glycerol 3-phosphate (G3P), the key precursor for phospholipid synthesis. The sequence is that of Glycerol-3-phosphate dehydrogenase [NAD(P)+] from Burkholderia lata (strain ATCC 17760 / DSM 23089 / LMG 22485 / NCIMB 9086 / R18194 / 383).